The chain runs to 566 residues: Proline--tRNA ligase 1 (566 aa).

It belongs to the class-II aminoacyl-tRNA synthetase family. ProS type 1 subfamily. Homodimer.

Its subcellular location is the cytoplasm. The enzyme catalyses tRNA(Pro) + L-proline + ATP = L-prolyl-tRNA(Pro) + AMP + diphosphate. Functionally, catalyzes the attachment of proline to tRNA(Pro) in a two-step reaction: proline is first activated by ATP to form Pro-AMP and then transferred to the acceptor end of tRNA(Pro). As ProRS can inadvertently accommodate and process non-cognate amino acids such as alanine and cysteine, to avoid such errors it has two additional distinct editing activities against alanine. One activity is designated as 'pretransfer' editing and involves the tRNA(Pro)-independent hydrolysis of activated Ala-AMP. The other activity is designated 'posttransfer' editing and involves deacylation of mischarged Ala-tRNA(Pro). The misacylated Cys-tRNA(Pro) is not edited by ProRS. The sequence is that of Proline--tRNA ligase 1 from Bacillus cereus (strain ZK / E33L).